A 334-amino-acid chain; its full sequence is Chemotactic signal transduction system substrate-binding protein CosB (334 aa).

A signal peptide spans 1 to 29; that stretch reads MMDTPEHASTSSRRQLLGMLAAGGTTAVA.

It belongs to the OsmX family.

It localises to the cell membrane. Functionally, mediates chemotaxis towards compatible osmolytes. May function as a receptor that binds the osmolytes and transduces a signal to CosT. Has probably no additional role in transport. This Halobacterium salinarum (strain ATCC 29341 / DSM 671 / R1) protein is Chemotactic signal transduction system substrate-binding protein CosB (cosB).